The chain runs to 177 residues: Putative HVA22-like protein g (177 aa).

Residues 145 to 165 are disordered; that stretch reads QSTPKSKAEEKKETTIPKLDD. Residues 150 to 165 show a composition bias toward basic and acidic residues; the sequence is SKAEEKKETTIPKLDD.

Belongs to the DP1 family.

The protein is Putative HVA22-like protein g (HVA22G) of Arabidopsis thaliana (Mouse-ear cress).